Here is a 227-residue protein sequence, read N- to C-terminus: Phosphoglycolate phosphatase (227 aa).

The Nucleophile role is filled by D8. The Mg(2+) site is built by D8 and D10. K152 serves as a coordination point for substrate. Mg(2+) is bound by residues D175 and D179.

This sequence belongs to the archaeal SPP-like hydrolase family. It depends on Mg(2+) as a cofactor.

The enzyme catalyses 2-phosphoglycolate + H2O = glycolate + phosphate. In terms of biological role, catalyzes the dephosphorylation of 2-phosphoglycolate. In Halorubrum lacusprofundi (strain ATCC 49239 / DSM 5036 / JCM 8891 / ACAM 34), this protein is Phosphoglycolate phosphatase.